Consider the following 813-residue polypeptide: Polycomb group protein FERTILIZATION-INDEPENDENT SEED 2 (813 aa).

Residues 1–27 are disordered; that stretch reads MARKSIRGKEVVMVSDDDDDDDDVDDD. The segment covering 15-26 has biased composition (acidic residues); it reads SDDDDDDDDVDD. The C2H2-type zinc finger occupies 134-155; it reads CPFCLIPCGGHEGLQLHLKSSH. 3 disordered regions span residues 197–216, 232–261, and 274–648; these read SPLT…DDSN, DLPR…SEKI, and ESSE…RKEL. Residues 232-246 show a composition bias toward basic and acidic residues; that stretch reads DLPRGTENDSTHVND. One copy of the A-1 repeat lies at 243–264; it reads HVNDDNVSSPPRAHSSEKISDI. The segment at 243 to 542 is 12 X approximate repeat A; the sequence is HVNDDNVSSP…HSSKKNKSTR (300 aa). One copy of the B-1 repeat lies at 265–281; sequence LTTTQLAIAESSEPKVP. Residues 265–640 are 7 X approximate repeat B; sequence LTTTQLAIAE…KAEPSEPKVT (376 aa). The A-2 repeat unit spans residues 282–304; it reads HVNDGNVSSPPRAHSSAEKNEST. Composition is skewed to basic and acidic residues over residues 296 to 307, 319 to 331, and 344 to 353; these read SSAEKNESTHVN, HSLE…HVNE, and KKNESTHMND. An A-3 repeat occupies 305 to 327; it reads HVNDDDDVSSPPRAHSLEKNEST. The stretch at 328 to 349 is one A-4 repeat; the sequence is HVNEDNISSPPKAHSSKKNEST. The stretch at 350–371 is one A-5 repeat; the sequence is HMNDEDVSFPPRTRSSKETSDI. Residues 372-388 form a B-2 repeat; that stretch reads LTTTQPAIVEPSEPKVR. The span at 388 to 402 shows a compositional bias: basic residues; the sequence is RRGSRRKQLYAKRYK. The B-3 repeat unit spans residues 403–419; that stretch reads ARETQPAIAESSEPKVL. Basic and acidic residues-rich tracts occupy residues 414–423 and 453–462; these read SEPKVLHVND and SEPKVPHVND. The A-6 repeat unit spans residues 420 to 441; it reads HVNDENVSSPPEAHSLEKASDI. Residues 442–458 form a B-4 repeat; it reads LTTTQPAIAESSEPKVP. One copy of the A-7 repeat lies at 459 to 481; the sequence is HVNDENVSSTPRAHSSKKNKSTR. A compositionally biased stretch (basic residues) spans 472-481; the sequence is HSSKKNKSTR. Residues 482–502 form an A-8 repeat; it reads KNVDNVPSPPKTRSSKKTSDI. Positions 501–512 are enriched in polar residues; the sequence is DILTTTQPTIAE. Residues 503–519 form a B-5 repeat; it reads LTTTQPTIAESSEPKVR. Basic and acidic residues predominate over residues 514–523; the sequence is SEPKVRHVND. The stretch at 520-542 is one A-9 repeat; sequence HVNDDNVSSTPRAHSSKKNKSTR. The A-10 repeat unit spans residues 543–563; that stretch reads KNDDNIPSPPKTRSSKKTSNI. One copy of the B-6 repeat lies at 564–579; it reads LTRTQPAIAESEPKVP. The span at 574–586 shows a compositional bias: basic and acidic residues; that stretch reads SEPKVPHVNDDKV. One copy of the A-11 repeat lies at 580 to 601; the sequence is HVNDDKVSSTPRAHSSKKNKST. Basic residues predominate over residues 593–602; it reads HSSKKNKSTH. An A-12 repeat occupies 602–623; the sequence is HKKDDNASLPPKTRSSKKTSDI. A B-7 repeat occupies 624–640; the sequence is LATTQPAKAEPSEPKVT. A VEFS-box region spans residues 648–783; that stretch reads LHAERCEAKR…CAKTFHKCTT (136 aa).

Belongs to the VEFS (VRN2-EMF2-FIS2-SU(Z)12) family. Probably indirectly associated with FIE and/or MEA. In plants, PcG complexes are probably composed of a member of the EZ family (CLF or MEA), FIE, and a member of the VEFS family (FIS2, VRN2 or EMF2). As to expression, weakly expressed. Expressed in late siliques.

The protein resides in the nucleus. In terms of biological role, polycomb group (PcG) protein. PcG proteins act by forming multiprotein complexes, which are required to maintain the transcriptionally repressive state of homeotic genes throughout development. PcG proteins are not required to initiate repression, but to maintain it during later stages of development. They probably act via the methylation of histones, rendering chromatin heritably changed in its expressibility. Required to prevent the proliferation of the central cell by repressing unknown target genes before fertilization. Regulates the anteroposterior organization of the endosperm. This Arabidopsis thaliana (Mouse-ear cress) protein is Polycomb group protein FERTILIZATION-INDEPENDENT SEED 2.